A 647-amino-acid polypeptide reads, in one-letter code: Acetyl-coenzyme A synthetase (647 aa).

Residues arginine 189 to lysine 192, threonine 307, and asparagine 331 contribute to the CoA site. ATP contacts are provided by residues glycine 383 to proline 385, aspartate 407 to threonine 412, aspartate 496, and arginine 511. CoA is bound at residue serine 519. Arginine 522 contributes to the ATP binding site. Residues histidine 535 and valine 538 each contribute to the Mg(2+) site. Arginine 580 lines the CoA pocket. The residue at position 605 (lysine 605) is an N6-acetyllysine.

The protein belongs to the ATP-dependent AMP-binding enzyme family. Mg(2+) is required as a cofactor. Acetylated. Deacetylation by the SIR2-homolog deacetylase activates the enzyme.

It carries out the reaction acetate + ATP + CoA = acetyl-CoA + AMP + diphosphate. In terms of biological role, catalyzes the conversion of acetate into acetyl-CoA (AcCoA), an essential intermediate at the junction of anabolic and catabolic pathways. AcsA undergoes a two-step reaction. In the first half reaction, AcsA combines acetate with ATP to form acetyl-adenylate (AcAMP) intermediate. In the second half reaction, it can then transfer the acetyl group from AcAMP to the sulfhydryl group of CoA, forming the product AcCoA. The chain is Acetyl-coenzyme A synthetase from Syntrophus aciditrophicus (strain SB).